Reading from the N-terminus, the 238-residue chain is N-methyltransferase vrtF (238 aa).

It belongs to the methyltransferase superfamily.

It participates in secondary metabolite biosynthesis; terpenoid biosynthesis. In terms of biological role, N-methyltransferase; part of the gene cluster that mediates the biosynthesis of viridicatumtoxin, a tetracycline-like fungal meroterpenoid with a unique, fused spirobicyclic ring system. The first step of the pathway is the production of the malonamoyl-CoA starter unit for the polyketide synthase vrtA. The aldolase vrtJ may be involved in the synthesis of the malonamate substrate for malonamoyl-CoA synthetase vrtB. The polyketide synthase vrtA then may utilize the malonamoyl-CoA starter unit, followed by sequential condensation of eight malonyl-CoA units to form the polyketide backbone. The cyclization of the last ring could be mediated by the lactamase-like protein vrtG. The proposed post-PKS tailoring steps are a hydroxylation at C5 catalyzed the cytochrome P450 monooxygenase vrtE, a hydroxylation at C12a catalyzed by VrtH and/or VrtI, and an O-methylation by the O-methyltransferase vrtF. VrtC is then proposed to catalyze the transfer of a geranyl group synthesized by vrtD to the aromatic C ring of the tetracyclic polyketide intermediate of viridicatumtoxin to yield previridicatumtoxin. Finally, the cytochrome P450 monooxygenase vrtK catalyzes the spirocyclization of the geranyl moiety of previridicatumtoxin to afford viridicatumtoxin. The chain is N-methyltransferase vrtF from Penicillium aethiopicum.